A 152-amino-acid polypeptide reads, in one-letter code: MMEFKDFSTGLYVAAKFSELTLDALEELQRSLRVPNPVPREKIHSTICYSRVNVPYVPSSGSFEVASSGHLEVWKTQDGSTLVLVLDSEYLRCRHMYARALGATHDFDDYTPHITLSYNVGPLSFSGDVQIPVVLDREYKEPLKLDWADDLK.

Tyrosine 12 serves as a coordination point for 3',3'-cGAMP. Residue tyrosine 12 participates in 3',3'-cUAMP binding. Catalysis depends on residues histidine 44, threonine 46, histidine 113, and threonine 115. 3',3'-cGAMP-binding residues include glutamate 141 and tryptophan 147. Positions 141 and 147 each coordinate 3',3'-cUAMP.

This sequence belongs to the anti-CBASS protein Acb1 family.

It carries out the reaction 3',3'-cUAMP + H2O = U[3'-5']pAp[3'] + H(+). The enzyme catalyses 3',3',3'-c-tri-AMP + H2O = A[3'-5']pA[3'-5']pAp[3'] + H(+). The catalysed reaction is 3',3',3'-cAAG + H2O = G[3'-5']pA[3'-5']pAp[3'] + H(+). It catalyses the reaction 3',3',3'-cAAG + H2O = A[3'-5']pG[3'-5']pAp[3'] + H(+). It carries out the reaction 3',3'-cGAMP + H2O = G[3'-5']pAp[3'] + H(+). Its function is as follows. Counteracts the host CBASS antiviral system. Phosphodiesterase that enables metal-independent hydrolysis of the host cyclic di- and trinucleotide CBASS signals such as 3'3'-cGAMP, 3'3'cUA, and 3'3'3'-cAAA. Does not cleave cGG or cA4. Besides evasion of the CBASS system, might also enable evasion of the type III CRISPR systems that use cA3 signals. The protein is Anti-CBASS protein Acb1 (57B) of Escherichia coli (Bacteriophage T4).